Here is a 199-residue protein sequence, read N- to C-terminus: Recombination protein RecR (199 aa).

The segment at 58 to 73 adopts a C4-type zinc-finger fold; the sequence is CVRCGNITNADLCGIC. Residues 81–176 enclose the Toprim domain; sequence GELCVVEDVA…QVTSLAQGVP (96 aa).

This sequence belongs to the RecR family.

Its function is as follows. May play a role in DNA repair. It seems to be involved in an RecBC-independent recombinational process of DNA repair. It may act with RecF and RecO. The chain is Recombination protein RecR from Cereibacter sphaeroides (strain ATCC 17029 / ATH 2.4.9) (Rhodobacter sphaeroides).